Here is a 184-residue protein sequence, read N- to C-terminus: Threonylcarbamoyl-AMP synthase (184 aa).

A YrdC-like domain is found at 1–184 (MNNLENIVEQ…IFTQHIFRQG (184 aa)).

Belongs to the SUA5 family. TsaC subfamily.

The protein resides in the cytoplasm. The enzyme catalyses L-threonine + hydrogencarbonate + ATP = L-threonylcarbamoyladenylate + diphosphate + H2O. In terms of biological role, required for the formation of a threonylcarbamoyl group on adenosine at position 37 (t(6)A37) in tRNAs that read codons beginning with adenine. Catalyzes the conversion of L-threonine, HCO(3)(-)/CO(2) and ATP to give threonylcarbamoyl-AMP (TC-AMP) as the acyladenylate intermediate, with the release of diphosphate. This Actinobacillus pleuropneumoniae serotype 5b (strain L20) protein is Threonylcarbamoyl-AMP synthase.